A 256-amino-acid polypeptide reads, in one-letter code: 2-C-methyl-D-erythritol 4-phosphate cytidylyltransferase (256 aa).

Belongs to the IspD/TarI cytidylyltransferase family. IspD subfamily.

It catalyses the reaction 2-C-methyl-D-erythritol 4-phosphate + CTP + H(+) = 4-CDP-2-C-methyl-D-erythritol + diphosphate. Its pathway is isoprenoid biosynthesis; isopentenyl diphosphate biosynthesis via DXP pathway; isopentenyl diphosphate from 1-deoxy-D-xylulose 5-phosphate: step 2/6. Catalyzes the formation of 4-diphosphocytidyl-2-C-methyl-D-erythritol from CTP and 2-C-methyl-D-erythritol 4-phosphate (MEP). The protein is 2-C-methyl-D-erythritol 4-phosphate cytidylyltransferase of Corynebacterium glutamicum (strain R).